Here is a 441-residue protein sequence, read N- to C-terminus: tRNA(Ile)-lysidine synthase (441 aa).

28 to 33 (SGGTDS) contributes to the ATP binding site.

The protein belongs to the tRNA(Ile)-lysidine synthase family.

The protein localises to the cytoplasm. It catalyses the reaction cytidine(34) in tRNA(Ile2) + L-lysine + ATP = lysidine(34) in tRNA(Ile2) + AMP + diphosphate + H(+). Functionally, ligates lysine onto the cytidine present at position 34 of the AUA codon-specific tRNA(Ile) that contains the anticodon CAU, in an ATP-dependent manner. Cytidine is converted to lysidine, thus changing the amino acid specificity of the tRNA from methionine to isoleucine. The chain is tRNA(Ile)-lysidine synthase from Orientia tsutsugamushi (strain Boryong) (Rickettsia tsutsugamushi).